A 164-amino-acid chain; its full sequence is 6,7-dimethyl-8-ribityllumazine synthase (164 aa).

5-amino-6-(D-ribitylamino)uracil contacts are provided by residues Phe24, 58–60 (ALE), and 82–84 (AVI). A (2S)-2-hydroxy-3-oxobutyl phosphate-binding site is contributed by 87–88 (ET). The active-site Proton donor is the His90. A 5-amino-6-(D-ribitylamino)uracil-binding site is contributed by Asn115. Arg129 is a (2S)-2-hydroxy-3-oxobutyl phosphate binding site.

The protein belongs to the DMRL synthase family.

The enzyme catalyses (2S)-2-hydroxy-3-oxobutyl phosphate + 5-amino-6-(D-ribitylamino)uracil = 6,7-dimethyl-8-(1-D-ribityl)lumazine + phosphate + 2 H2O + H(+). It participates in cofactor biosynthesis; riboflavin biosynthesis; riboflavin from 2-hydroxy-3-oxobutyl phosphate and 5-amino-6-(D-ribitylamino)uracil: step 1/2. Functionally, catalyzes the formation of 6,7-dimethyl-8-ribityllumazine by condensation of 5-amino-6-(D-ribitylamino)uracil with 3,4-dihydroxy-2-butanone 4-phosphate. This is the penultimate step in the biosynthesis of riboflavin. This Ralstonia nicotianae (strain ATCC BAA-1114 / GMI1000) (Ralstonia solanacearum) protein is 6,7-dimethyl-8-ribityllumazine synthase.